Here is a 68-residue protein sequence, read N- to C-terminus: Large ribosomal subunit protein uL29 (68 aa).

It belongs to the universal ribosomal protein uL29 family.

This chain is Large ribosomal subunit protein uL29, found in Chlorobaculum tepidum (strain ATCC 49652 / DSM 12025 / NBRC 103806 / TLS) (Chlorobium tepidum).